Here is a 290-residue protein sequence, read N- to C-terminus: MIETKPIDGKAFAAGLRARIAEEVAVLVRDHDLKPGLAVVLVGEDPASQVYVRNKAAQTAEAGMASFEYKLPADTAEADLLALVEKLNADPAVNGILVQLPLPAHLDSMKVLAAIDPAKDVDGFHVVNAGRLAVGLDALVPCTPLGCVMLLKHHLGNLSGLNAVVVGRSNIVGKPAAQLLLREDCTVTIAHSRTRDLPGMCRQADILVAAVGRPEMVRGDWIKPGATVIDVGINRVPKADGKTRLVGDVAYEEALGVAGLITPVPGGVGPMTIACLLQNTLTAARRQKGL.

Residues 167–169 (GRS), serine 192, and isoleucine 233 each bind NADP(+).

Belongs to the tetrahydrofolate dehydrogenase/cyclohydrolase family. Homodimer.

It catalyses the reaction (6R)-5,10-methylene-5,6,7,8-tetrahydrofolate + NADP(+) = (6R)-5,10-methenyltetrahydrofolate + NADPH. The enzyme catalyses (6R)-5,10-methenyltetrahydrofolate + H2O = (6R)-10-formyltetrahydrofolate + H(+). Its pathway is one-carbon metabolism; tetrahydrofolate interconversion. Functionally, catalyzes the oxidation of 5,10-methylenetetrahydrofolate to 5,10-methenyltetrahydrofolate and then the hydrolysis of 5,10-methenyltetrahydrofolate to 10-formyltetrahydrofolate. The sequence is that of Bifunctional protein FolD from Azorhizobium caulinodans (strain ATCC 43989 / DSM 5975 / JCM 20966 / LMG 6465 / NBRC 14845 / NCIMB 13405 / ORS 571).